Consider the following 541-residue polypeptide: Lysosomal cobalamin transport escort protein LMBD1 (541 aa).

Topologically, residues 1–11 (MATPVALLSES) are extracellular. Residues 12–31 (VLGWSIFTVVLLVILAFCWV) traverse the membrane as a helical segment. Residues 32-50 (YIRKYQSRQESEVISTITA) lie on the Cytoplasmic side of the membrane. Residues 51 to 71 (ICALAIALITSALLPVDIFLV) traverse the membrane as a helical segment. At 72 to 101 (SFMKHPNGTYKEWAANNETRVQIEDTVLYG) the chain is on the extracellular side. N78 and N88 each carry an N-linked (GlcNAc...) asparagine glycan. The helical transmembrane segment at 102–122 (YYTLYSIILFCVFLWIPFVYF) threads the bilayer. Residues 123–145 (YYEEKDEDNNNKCLQVKNALKYT) are Cytoplasmic-facing. Residues 146-166 (IGFVIVCSALLLIGTFVPLAS) traverse the membrane as a helical segment. Residues 167-189 (PPNQNSTQWQKVQYLFEELGSSH) lie on the Extracellular side of the membrane. N-linked (GlcNAc...) asparagine glycosylation occurs at N171. Residues 190–210 (GLAALSFSISSLTLIGMLAVI) traverse the membrane as a helical segment. The Cytoplasmic portion of the chain corresponds to 211–306 (TYTAYGMSVL…KVGSALRPMK (96 aa)). Residues 307-327 (ILLGVFFILVALLFFVTLFIS) traverse the membrane as a helical segment. Topologically, residues 328-365 (NLDKALHSAGISTGFIIFGTNLTNPLNELLLALQPVFP) are extracellular. N348 carries N-linked (GlcNAc...) asparagine glycosylation. Residues 366 to 386 (LDYVLITVITMYFVFTSMAGI) form a helical membrane-spanning segment. Topologically, residues 387–409 (RNMGIWFFWIRLYKIRPQRTRPQ) are cytoplasmic. A helical transmembrane segment spans residues 410–430 (ALLFLCMILLLIVLHTSYMIY). At 431–488 (SLAPQYVMYGSQKYLLQTPLPTAVPSQSNRSATITKICDADAPEDQCTVTRSYLFLHK) the chain is on the extracellular side. A glycan (N-linked (GlcNAc...) asparagine) is linked at N459. The helical transmembrane segment at 489–509 (FWFFSTIYYFGNWAFLGVFLI) threads the bilayer. The Cytoplasmic segment spans residues 510-541 (GLVVSCCKGKKSVIEGEVDADDSDFSDDEYVH).

It belongs to the LIMR family. LMBRD1 subfamily.

Its subcellular location is the endoplasmic reticulum membrane. The protein localises to the lysosome membrane. It localises to the cell membrane. Functionally, lysosomal membrane chaperone required to export cobalamin (vitamin B12) from the lysosome to the cytosol, allowing its conversion to cofactors. Targets ABCD4 transporter from the endoplasmic reticulum to the lysosome. Then forms a complex with lysosomal ABCD4 and cytoplasmic MMACHC to transport cobalamin across the lysosomal membrane. May play a role in mediating and regulating the internalization of the insulin receptor. This chain is Lysosomal cobalamin transport escort protein LMBD1 (lmbrd1), found in Danio rerio (Zebrafish).